The following is a 217-amino-acid chain: MGLGVAEREQIAKRAATEIKQGMIVNLGIGIPSLVPNFLKPDMQVMFQAENGVLGIGESPEKGEEDAHLCNAAGYPVRAVKGASYFDTTMSFAMIRKGKIDITILGALQVSQSGDLANWLVPGKKVPGMGGAMELAQKAKKVVVVMSHTDQKGRPKLTERCTLPLTAAGCVDLIITEKAVLEVDSHHFILKELMNGSTIDEVTRLTEAEIKIDMPFS.

Glu-50 is a catalytic residue.

This sequence belongs to the 3-oxoacid CoA-transferase subunit B family. Heterodimer of a subunit alpha and a subunit beta.

In Bacillus subtilis (strain 168), this protein is Probable coenzyme A transferase subunit beta (yodR).